We begin with the raw amino-acid sequence, 368 residues long: GTPase Obg (368 aa).

Residues 1–161 (MRFVDEATIT…RSLRLELKIL (161 aa)) form the Obg domain. The 176-residue stretch at 162-337 (ADAGLLGLPN…VVAEMWRMRD (176 aa)) folds into the OBG-type G domain. Residues 168–175 (GLPNAGKS), 193–197 (FTTLI), 217–220 (DIPG), 290–293 (NKID), and 318–320 (SAL) each bind GTP. Residues serine 175 and threonine 195 each coordinate Mg(2+).

The protein belongs to the TRAFAC class OBG-HflX-like GTPase superfamily. OBG GTPase family. Monomer. Requires Mg(2+) as cofactor.

The protein resides in the cytoplasm. An essential GTPase which binds GTP, GDP and possibly (p)ppGpp with moderate affinity, with high nucleotide exchange rates and a fairly low GTP hydrolysis rate. Plays a role in control of the cell cycle, stress response, ribosome biogenesis and in those bacteria that undergo differentiation, in morphogenesis control. This chain is GTPase Obg, found in Nitratidesulfovibrio vulgaris (strain DSM 19637 / Miyazaki F) (Desulfovibrio vulgaris).